We begin with the raw amino-acid sequence, 463 residues long: Phosphoglucosamine mutase (463 aa).

The active-site Phosphoserine intermediate is Ser-110. Mg(2+) contacts are provided by Ser-110, Asp-255, Asp-257, and Asp-259. Residue Ser-110 is modified to Phosphoserine.

Belongs to the phosphohexose mutase family. It depends on Mg(2+) as a cofactor. Post-translationally, activated by phosphorylation.

The enzyme catalyses alpha-D-glucosamine 1-phosphate = D-glucosamine 6-phosphate. In terms of biological role, catalyzes the conversion of glucosamine-6-phosphate to glucosamine-1-phosphate. The protein is Phosphoglucosamine mutase of Koribacter versatilis (strain Ellin345).